The following is a 768-amino-acid chain: Cullin-3-B (768 aa).

The segment at Val677 to Asp698 is disordered. The span at Gly682–Asp698 shows a compositional bias: basic and acidic residues. The Cullin neddylation domain occupies Asp698–Asp760. Lys712 participates in a covalent cross-link: Glycyl lysine isopeptide (Lys-Gly) (interchain with G-Cter in NEDD8).

This sequence belongs to the cullin family. In terms of assembly, component of multiple BCR (BTB-CUL3-RBX1) E3 ubiquitin-protein ligase complexes formed of cul3, rbx1 and a variable BTB domain-containing protein acting as both, adapter to cullin and substrate recognition subunit. Interacts with btbd6. In terms of processing, neddylated. Attachment of NEDD8 is required for the E3 ubiquitin-protein ligase activity of the SCF-like complex.

Its subcellular location is the nucleus. Its pathway is protein modification; protein ubiquitination. In terms of biological role, probable core component of cullin-based SCF-like E3 ubiquitin-protein ligase complexes which mediate the ubiquitination and subsequent proteasomal degradation of target proteins. The E3 ubiquitin-protein ligase activity of the complex is dependent on the neddylation of the cullin subunit. Involved in ER-Golgi transport by regulating the size of COPII coats, thereby playing a key role in collagen export, which is required for embryonic stem (ES) cells division. May play a role in the regulation of mittotic entry via ubiquitination of aurka. This chain is Cullin-3-B (cul3b), found in Xenopus laevis (African clawed frog).